Here is a 92-residue protein sequence, read N- to C-terminus: Small ribosomal subunit protein uS19 (92 aa).

The protein belongs to the universal ribosomal protein uS19 family.

In terms of biological role, protein S19 forms a complex with S13 that binds strongly to the 16S ribosomal RNA. The sequence is that of Small ribosomal subunit protein uS19 from Desulfatibacillum aliphaticivorans.